We begin with the raw amino-acid sequence, 299 residues long: Acetaldehyde dehydrogenase 2 (299 aa).

Cysteine 130 serves as the catalytic Acyl-thioester intermediate. NAD(+) contacts are provided by residues 161–169 (SVGPGTRKN) and asparagine 272.

It belongs to the acetaldehyde dehydrogenase family.

The enzyme catalyses acetaldehyde + NAD(+) + CoA = acetyl-CoA + NADH + H(+). The sequence is that of Acetaldehyde dehydrogenase 2 from Burkholderia lata (strain ATCC 17760 / DSM 23089 / LMG 22485 / NCIMB 9086 / R18194 / 383).